Reading from the N-terminus, the 139-residue chain is Aspartate 1-decarboxylase (139 aa).

Serine 25 acts as the Schiff-base intermediate with substrate; via pyruvic acid in catalysis. Residue serine 25 is modified to Pyruvic acid (Ser). Threonine 57 contributes to the substrate binding site. Tyrosine 58 (proton donor) is an active-site residue. 73–75 (GAA) is a binding site for substrate. The disordered stretch occupies residues 116 to 139 (ELGSDPAHAPEGSGLTSPRSLTFA). The segment covering 129–139 (GLTSPRSLTFA) has biased composition (polar residues).

This sequence belongs to the PanD family. As to quaternary structure, heterooctamer of four alpha and four beta subunits. Pyruvate is required as a cofactor. Is synthesized initially as an inactive proenzyme, which is activated by self-cleavage at a specific serine bond to produce a beta-subunit with a hydroxyl group at its C-terminus and an alpha-subunit with a pyruvoyl group at its N-terminus.

It is found in the cytoplasm. It catalyses the reaction L-aspartate + H(+) = beta-alanine + CO2. Its pathway is cofactor biosynthesis; (R)-pantothenate biosynthesis; beta-alanine from L-aspartate: step 1/1. Its function is as follows. Catalyzes the pyruvoyl-dependent decarboxylation of aspartate to produce beta-alanine. In Nocardia farcinica (strain IFM 10152), this protein is Aspartate 1-decarboxylase.